A 134-amino-acid polypeptide reads, in one-letter code: Small ribosomal subunit protein uS11 (134 aa).

It belongs to the universal ribosomal protein uS11 family. As to quaternary structure, part of the 30S ribosomal subunit. Interacts with proteins S7 and S18. Binds to IF-3.

Its function is as follows. Located on the platform of the 30S subunit, it bridges several disparate RNA helices of the 16S rRNA. Forms part of the Shine-Dalgarno cleft in the 70S ribosome. This chain is Small ribosomal subunit protein uS11, found in Frankia alni (strain DSM 45986 / CECT 9034 / ACN14a).